A 314-amino-acid chain; its full sequence is RNA 2'-O-methyltransferase FBLL1 (314 aa).

Gly residues predominate over residues 1 to 59 (MKPAGGRGGWGWGGGKGGSKGGDTGSGTKGGFGARTRGSSGGGRGRGRGGGGGGGGGGG). The tract at residues 1–82 (MKPAGGRGGW…RRKKGITVSV (82 aa)) is disordered. R7 bears the Omega-N-methylarginine mark. Residues 64–77 (RGGPGKNKNRRKKG) are compositionally biased toward basic residues. S-adenosyl-L-methionine-binding positions include 166–167 (TT), 185–186 (EF), 210–211 (DA), and 230–233 (DVAQ).

It belongs to the methyltransferase superfamily. Fibrillarin family. In terms of assembly, component of a box C/D small nucleolar ribonucleoprotein (snoRNP) complex composed of FBLL1, SNU13/NHP2L1, NOP56 and NOP58 and a guide snoRNA which mediates 2'-hydroxyl ribose methylation in RNAs.

Its subcellular location is the nucleus. It localises to the nucleolus. The catalysed reaction is a ribonucleotide in RNA + S-adenosyl-L-methionine = a 2'-O-methylribonucleotide in RNA + S-adenosyl-L-homocysteine + H(+). S-adenosyl-L-methionine-dependent RNA methyltransferase that catalyzes 2'-hydroxyl ribose methylation in RNAs. Functions as part of box C/D small nucleolar ribonucleoprotein (snoRNP) complexes, where guide snoRNAs ensure methylation specificity through base pairing with RNA substrates. Exhibits broad substrate specificity, methylating multiple sites on ribosomal RNAs (rRNAs) and messenger RNAs (mRNAs) depending on the guide snoRNA incorporated in the complex. Specifically expressed in brain, it regulates the expression of GAP43 by stabilizing its mRNA through methylation and thereby plays an indirect role in neuronal differentiation. This is RNA 2'-O-methyltransferase FBLL1 from Mus musculus (Mouse).